The chain runs to 211 residues: Large ribosomal subunit protein uL3 (211 aa).

The interval 125–148 (GPASHGSKKWHRRPGSIGQRKTPG) is disordered.

It belongs to the universal ribosomal protein uL3 family. Part of the 50S ribosomal subunit. Forms a cluster with proteins L14 and L19. Also contacts proteins L13 and L17.

In terms of biological role, one of the primary rRNA binding proteins, it binds directly near the 3'-end of the 23S rRNA, where it nucleates assembly of the 50S subunit. The protein is Large ribosomal subunit protein uL3 (rplC) of Deinococcus radiodurans (strain ATCC 13939 / DSM 20539 / JCM 16871 / CCUG 27074 / LMG 4051 / NBRC 15346 / NCIMB 9279 / VKM B-1422 / R1).